Consider the following 226-residue polypeptide: Holliday junction branch migration complex subunit RuvA (226 aa).

The segment at 1–67 (MITSVYAKIE…AINKELYAFK (67 aa)) is domain I. A domain II region spans residues 68 to 145 (SLKEKEWFKA…YLKNQIVVSD (78 aa)). Residues 146-167 (KVEPQIDDDEKIDDSKDLNDDE) are flexible linker. Residues 168–226 (LLSEIVIEAIDCLISLGYKQEQIKTALAEIDLKNESINDSADLVAVIIKQIGLRTSEVS) are domain III.

The protein belongs to the RuvA family. In terms of assembly, homotetramer. Forms an RuvA(8)-RuvB(12)-Holliday junction (HJ) complex. HJ DNA is sandwiched between 2 RuvA tetramers; dsDNA enters through RuvA and exits via RuvB. An RuvB hexamer assembles on each DNA strand where it exits the tetramer. Each RuvB hexamer is contacted by two RuvA subunits (via domain III) on 2 adjacent RuvB subunits; this complex drives branch migration. In the full resolvosome a probable DNA-RuvA(4)-RuvB(12)-RuvC(2) complex forms which resolves the HJ.

It localises to the cytoplasm. Functionally, the RuvA-RuvB-RuvC complex processes Holliday junction (HJ) DNA during genetic recombination and DNA repair, while the RuvA-RuvB complex plays an important role in the rescue of blocked DNA replication forks via replication fork reversal (RFR). RuvA specifically binds to HJ cruciform DNA, conferring on it an open structure. The RuvB hexamer acts as an ATP-dependent pump, pulling dsDNA into and through the RuvAB complex. HJ branch migration allows RuvC to scan DNA until it finds its consensus sequence, where it cleaves and resolves the cruciform DNA. This Mycoplasmoides gallisepticum (strain R(low / passage 15 / clone 2)) (Mycoplasma gallisepticum) protein is Holliday junction branch migration complex subunit RuvA.